A 673-amino-acid chain; its full sequence is UvrABC system protein B (673 aa).

The 158-residue stretch at 26-183 (ANFEAGLAKQ…RHLTDLQYTR (158 aa)) folds into the Helicase ATP-binding domain. Residue 39–46 (GVTGSGKT) participates in ATP binding. Residues 92–115 (YYDYYQPEAYVPSSDTFIEKDSSI) carry the Beta-hairpin motif. Positions 431–597 (QVDDLMSEIH…SVERPISDIM (167 aa)) constitute a Helicase C-terminal domain. Residues 601–631 (REDAAEKKSGKGRSKSRQVAEETPDYRAMKP) form a disordered region. The span at 618–630 (QVAEETPDYRAMK) shows a compositional bias: basic and acidic residues. In terms of domain architecture, UVR spans 635 to 670 (AGKLKSLEQKMYQHAKDLEFEAAAQIRDQIQKLKTA).

It belongs to the UvrB family. Forms a heterotetramer with UvrA during the search for lesions. Interacts with UvrC in an incision complex.

Its subcellular location is the cytoplasm. The UvrABC repair system catalyzes the recognition and processing of DNA lesions. A damage recognition complex composed of 2 UvrA and 2 UvrB subunits scans DNA for abnormalities. Upon binding of the UvrA(2)B(2) complex to a putative damaged site, the DNA wraps around one UvrB monomer. DNA wrap is dependent on ATP binding by UvrB and probably causes local melting of the DNA helix, facilitating insertion of UvrB beta-hairpin between the DNA strands. Then UvrB probes one DNA strand for the presence of a lesion. If a lesion is found the UvrA subunits dissociate and the UvrB-DNA preincision complex is formed. This complex is subsequently bound by UvrC and the second UvrB is released. If no lesion is found, the DNA wraps around the other UvrB subunit that will check the other stand for damage. The protein is UvrABC system protein B of Xanthomonas oryzae pv. oryzae (strain MAFF 311018).